The chain runs to 466 residues: Soluble pyridine nucleotide transhydrogenase (466 aa).

Residue 36-45 participates in FAD binding; sequence ERYHQVGGGC.

The protein belongs to the class-I pyridine nucleotide-disulfide oxidoreductase family. FAD is required as a cofactor.

The protein localises to the cytoplasm. The enzyme catalyses NAD(+) + NADPH = NADH + NADP(+). In terms of biological role, conversion of NADPH, generated by peripheral catabolic pathways, to NADH, which can enter the respiratory chain for energy generation. This Colwellia psychrerythraea (strain 34H / ATCC BAA-681) (Vibrio psychroerythus) protein is Soluble pyridine nucleotide transhydrogenase.